The chain runs to 260 residues: Triosephosphate isomerase (260 aa).

11 to 13 (NWK) lines the substrate pocket. Catalysis depends on H103, which acts as the Electrophile. E175 acts as the Proton acceptor in catalysis. Residues G181, S220, and 241–242 (GG) each bind substrate.

It belongs to the triosephosphate isomerase family. In terms of assembly, homodimer.

Its subcellular location is the cytoplasm. The catalysed reaction is D-glyceraldehyde 3-phosphate = dihydroxyacetone phosphate. The protein operates within carbohydrate biosynthesis; gluconeogenesis. It participates in carbohydrate degradation; glycolysis; D-glyceraldehyde 3-phosphate from glycerone phosphate: step 1/1. Its function is as follows. Involved in the gluconeogenesis. Catalyzes stereospecifically the conversion of dihydroxyacetone phosphate (DHAP) to D-glyceraldehyde-3-phosphate (G3P). In Shewanella sp. (strain MR-7), this protein is Triosephosphate isomerase.